A 209-amino-acid polypeptide reads, in one-letter code: Uracil phosphoribosyltransferase (209 aa).

5-phospho-alpha-D-ribose 1-diphosphate is bound by residues Arg-79, Arg-104, and 131–139; that span reads DPMLATGHT. Residues Ile-194 and 199-201 each bind uracil; that span reads GDA. Asp-200 is a 5-phospho-alpha-D-ribose 1-diphosphate binding site.

This sequence belongs to the UPRTase family. It depends on Mg(2+) as a cofactor.

It carries out the reaction UMP + diphosphate = 5-phospho-alpha-D-ribose 1-diphosphate + uracil. It participates in pyrimidine metabolism; UMP biosynthesis via salvage pathway; UMP from uracil: step 1/1. Allosterically activated by GTP. Functionally, catalyzes the conversion of uracil and 5-phospho-alpha-D-ribose 1-diphosphate (PRPP) to UMP and diphosphate. This Caulobacter sp. (strain K31) protein is Uracil phosphoribosyltransferase.